Here is a 341-residue protein sequence, read N- to C-terminus: Krueppel-like factor 17 (341 aa).

The disordered stretch occupies residues 214-252 (VTESNTQEEPFVREPPTPAPEGAESPSTSRGATRRQSPV). Positions 238 to 252 (SPSTSRGATRRQSPV) are enriched in polar residues. 3 C2H2-type zinc fingers span residues 256–280 (YVCT…QRKH), 286–310 (FACD…KRIH), and 316–338 (HKCD…KRTH).

It belongs to the Sp1 C2H2-type zinc-finger protein family. As to expression, exclusively expressed in testis and ovary. Localized to step 3-8 spermatids in testis and growing oocytes in ovary.

Its subcellular location is the nucleus. In terms of biological role, transcription repressor that binds to the promoter of target genes and prevents their expression. Acts as a negative regulator of epithelial-mesenchymal transition and metastasis in breast cancer. Specifically binds the 5'-CACCC-3' sequence in the promoter of ID1, a key metastasis regulator in breast cancer, and repress its expression. May be a germ cell-specific transcription factor that plays important roles in spermatid differentiation and oocyte development. This chain is Krueppel-like factor 17 (Klf17), found in Mus musculus (Mouse).